Here is a 173-residue protein sequence, read N- to C-terminus: Phosphopantetheine adenylyltransferase (173 aa).

Substrate is bound at residue Ser-9. Residues 9–10 (SF) and His-17 each bind ATP. 3 residues coordinate substrate: Lys-41, Thr-73, and Arg-87. ATP contacts are provided by residues 88–90 (GLR), Glu-98, and 123–129 (YQHLSSS).

The protein belongs to the bacterial CoaD family. In terms of assembly, homohexamer. Mg(2+) is required as a cofactor.

The protein localises to the cytoplasm. The enzyme catalyses (R)-4'-phosphopantetheine + ATP + H(+) = 3'-dephospho-CoA + diphosphate. The protein operates within cofactor biosynthesis; coenzyme A biosynthesis; CoA from (R)-pantothenate: step 4/5. Its function is as follows. Reversibly transfers an adenylyl group from ATP to 4'-phosphopantetheine, yielding dephospho-CoA (dPCoA) and pyrophosphate. This chain is Phosphopantetheine adenylyltransferase, found in Limosilactobacillus reuteri (strain DSM 20016) (Lactobacillus reuteri).